The sequence spans 288 residues: Glucose uptake protein GlcU (288 aa).

Helical transmembrane passes span 4-26, 33-51, 56-75, 82-104, 114-136, 148-170, 180-197, 206-225, 230-252, and 264-283; these read LIAL…VGGG, GTTF…TGNA, LTII…GQGY, LIGV…TLFS, GVQV…LTSI, NFGK…VVVA, ALFF…ILSA, TLWN…FMFY, VGVA…GGIF, and IGIW…SEIL.

Belongs to the GRP transporter (TC 2.A.7.5) family.

It localises to the cell membrane. Involved in the uptake of glucose. The protein is Glucose uptake protein GlcU (glcU) of Staphylococcus xylosus.